A 124-amino-acid polypeptide reads, in one-letter code: Small ribosomal subunit protein bS6 (124 aa).

The interval 96-124 (ETAPSPMMKEVQREEARKAAQTTTEGQAA) is disordered. Residues 115 to 124 (AQTTTEGQAA) are compositionally biased toward polar residues.

This sequence belongs to the bacterial ribosomal protein bS6 family.

Functionally, binds together with bS18 to 16S ribosomal RNA. The protein is Small ribosomal subunit protein bS6 of Cupriavidus pinatubonensis (strain JMP 134 / LMG 1197) (Cupriavidus necator (strain JMP 134)).